The chain runs to 802 residues: Valine--tRNA ligase (802 aa).

The 'HIGH' region signature appears at 45-55 (PTISGQLHIGH). A 'KMSKS' region motif is present at residues 524–528 (KMSKS). ATP is bound at residue lysine 527.

This sequence belongs to the class-I aminoacyl-tRNA synthetase family. ValS type 2 subfamily. In terms of assembly, monomer.

Its subcellular location is the cytoplasm. It carries out the reaction tRNA(Val) + L-valine + ATP = L-valyl-tRNA(Val) + AMP + diphosphate. Functionally, catalyzes the attachment of valine to tRNA(Val). As ValRS can inadvertently accommodate and process structurally similar amino acids such as threonine, to avoid such errors, it has a 'posttransfer' editing activity that hydrolyzes mischarged Thr-tRNA(Val) in a tRNA-dependent manner. The sequence is that of Valine--tRNA ligase from Ehrlichia canis (strain Jake).